Here is a 306-residue protein sequence, read N- to C-terminus: Golgi to ER traffic protein 2 (306 aa).

Residues 1 to 18 (MSEISDAEKRRILREKRQ) show a composition bias toward basic and acidic residues. The disordered stretch occupies residues 1–100 (MSEISDAEKR…PPGSAEQQNG (100 aa)). The Cytoplasmic segment spans residues 1–172 (MSEISDAEKR…VEAHNIAVNK (172 aa)). The span at 34–57 (TGQTENSFLSTESPLDSRESTYPA) shows a compositional bias: polar residues. The span at 68-77 (DSTKQMDELL) shows a compositional bias: basic and acidic residues. Residues 78 to 90 (AKATSKTTSKASS) are compositionally biased toward low complexity. Polar residues predominate over residues 91 to 100 (PPGSAEQQNG). The helical transmembrane segment at 173-193 (LKSYTILVKWLFFLLPYLYYI) threads the bilayer. Over 194-214 (THSARDPFQHNAVNYVLDRSN) the chain is Lumenal. Residues 215–234 (FFTVFTTFEIVALSVYYQLL) traverse the membrane as a helical segment. Residues 235 to 281 (MSAEKSHNVNTLDNNSKILKLVSMVPPGLVPIPNLRGKVAQALQYWD) lie on the Cytoplasmic side of the membrane. Residues 282–302 (VVSMYLTDLCFAIVLAGLFQY) traverse the membrane as a helical segment. The Lumenal segment spans residues 303 to 306 (YHSM).

This sequence belongs to the GET2 family. Component of the Golgi to ER traffic (GET) complex, which is composed of GET1, GET2 and GET3. Within the complex, GET1 and GET2 form a heterotetramer which is stabilized by phosphatidylinositol binding and which binds to the GET3 homodimer.

Its subcellular location is the endoplasmic reticulum membrane. It is found in the golgi apparatus membrane. Required for the post-translational delivery of tail-anchored (TA) proteins to the endoplasmic reticulum. Together with GET1, acts as a membrane receptor for soluble GET3, which recognizes and selectively binds the transmembrane domain of TA proteins in the cytosol. The GET complex cooperates with the HDEL receptor ERD2 to mediate the ATP-dependent retrieval of resident ER proteins that contain a C-terminal H-D-E-L retention signal from the Golgi to the ER. The chain is Golgi to ER traffic protein 2 from Lachancea thermotolerans (strain ATCC 56472 / CBS 6340 / NRRL Y-8284) (Yeast).